Reading from the N-terminus, the 391-residue chain is 3-ketoacyl-CoA thiolase (391 aa).

The active-site Acyl-thioester intermediate is C95. Residues H347 and C377 each act as proton acceptor in the active site.

The protein belongs to the thiolase-like superfamily. Thiolase family. As to quaternary structure, heterotetramer of two alpha chains (FadB) and two beta chains (FadA).

It is found in the cytoplasm. The catalysed reaction is an acyl-CoA + acetyl-CoA = a 3-oxoacyl-CoA + CoA. Its pathway is lipid metabolism; fatty acid beta-oxidation. Catalyzes the final step of fatty acid oxidation in which acetyl-CoA is released and the CoA ester of a fatty acid two carbons shorter is formed. This chain is 3-ketoacyl-CoA thiolase, found in Alcanivorax borkumensis (strain ATCC 700651 / DSM 11573 / NCIMB 13689 / SK2).